The following is a 1167-amino-acid chain: RNA-directed RNA polymerase (1167 aa).

Residues 553-735 form the RdRp catalytic domain; sequence LTYGILAEAT…KALASYTGLE (183 aa).

This sequence belongs to the reoviridae RNA-directed RNA polymerase family. In terms of assembly, interacts with VP3 (Potential). Interacts with VP2 (Potential). Interacts with NSP5; this interaction is probably necessary for the formation of functional virus factories.

The protein resides in the virion. The enzyme catalyses RNA(n) + a ribonucleoside 5'-triphosphate = RNA(n+1) + diphosphate. Functionally, RNA-directed RNA polymerase that is involved in both transcription and genome replication. Together with VP3 capping enzyme, forms an enzyme complex positioned near the channels situated at each of the five-fold vertices of the core. Following infection, the outermost layer of the virus is lost, leaving a double-layered particle (DLP) made up of the core and VP6 shell. VP1 then catalyzes the transcription of fully conservative plus-strand genomic RNAs that are extruded through the DLP's channels into the cytoplasm where they function as mRNAs for translation of viral proteins. One copy of each of the viral (+)RNAs is also recruited during core assembly, together with newly synthesized polymerase complexes and VP2. The polymerase of these novo-formed particles catalyzes the synthesis of complementary minus-strands leading to dsDNA formation. To do so, the polymerase specifically recognizes conserved 3' sequence(s) in plus-strand RNA templates. Once dsRNA synthesis is complete, the polymerase switches to the transcriptional mode, thus providing secondary transcription. The polypeptide is RNA-directed RNA polymerase (Rotavirus X (isolate RVX/Human/Bangladesh/NADRV-B219/2002/GXP[X]) (RV ADRV-N)).